A 997-amino-acid chain; its full sequence is MDYNVKDFGALGDGVSDDTAAIQAAIDAAYAAGGGTVYLPAGEYRVSGGEEPSDGCLTIKSNVYIVGAGMGETVIKLVDGWDQDVTGIVRSAYGEETSNFGMSDLTLDGNRDNTSGKVDGWFNGYIPGEDGADRDVTLERVEIREMSGYGFDPHEQTINLTIRDSVAHDNGLDGFVADFQIGGVFENNVSYNNDRHGFNIVTSTNDFVLSNNVAYGNGGAGLVIQRGSYDVAHPYGILIDGGAYYDNGLEGVQIKMAHDVTLQNAEIYGNGLYGVRVYGAEDVQILDNYIHDNSQSGSYAEILLQSYDDTAGVSGNFYTTTGTWIEGNTIVGSANSTYGIQERADGTDYSSLYANSVSNVQSGSVRLYGTNSVVSDLPGTGQQATLEGTTGNDTLTGSEAHETLLGLDGNDRLNGGAGNDILDGGAGRDNLTGGAGADLFRVSARTDSYRTDSASFNDLITDFDPAQDRIDLSALGFTGLGDGYNGTLAVVLNSAGTRTYLKSYEADAEGRRFEIALDGNFAGLLDDGNLIFERPVIEGDAGNNALLGTSAAETLLGHAGNDTLDGAGGDDILVGGAGRDTLTGGAGADLFRFDALSDSQRNYTTGDNQGDRIVDFSVGEDKLDVSALGFTGLGDGYNGTLAVVVNSAGDRTYVKSYETDADGYRFEFSLEGNYQDLGSESFVFATPSGQQLLEGSAGNDSLQGTAADEIVHGGAGRDTLSGGAGADVFRFSELTDSYRTASTSFADLITDFDLADDRIDLSGLGFSGLGDGYDGTLAVVVNSTGTRTYLKSYEANAAGERFEIALDGDLSAFTGANLILDERVVLEGSDGNDTLDGGSAAEELLGGAGNDSLDGGAGNDILDGGAGRDTLSGGSGSDIFRYDDALDSFRNYGTGVTGTDTITDFTPGEDLIDLSALGYTGLGDGYNGTLAVVLNGDGTRTYLKDRESDAEGNQFEIALDGDLVDRLDAGDFIFAEAAATTAIEVVGGTPTEEQLVA.

PbH1 repeat units follow at residues 133 to 155 (DRDV…DPHE), 157 to 179 (TINL…VADF), 180 to 202 (QIGG…NIVT), 204 to 226 (TNDF…VIQR), 257 to 279 (AHDV…RVYG), 280 to 315 (AEDV…GVSG), and 320 to 359 (TTGT…SVSN). 10 Hemolysin-type calcium-binding repeats span residues 388–403 (GTTG…AHET), 406–422 (GLDG…NDIL), 424–439 (GGAG…GADL), 557–573 (GHAG…DDIL), 574–590 (VGGA…GADL), 695–709 (GSAG…AADE), 712–729 (HGGA…ADVF), 828–839 (GSDGNDTLDGGS), 846–862 (GGAG…NDIL), and 864–880 (GGAG…SDIF).

Belongs to the D-mannuronate C5-epimerase family. The cofactor is Ca(2+).

It is found in the secreted. The enzyme catalyses [(1-&gt;4)-beta-D-mannuronosyl](n) = [alginate](n). Its pathway is glycan biosynthesis; alginate biosynthesis. Its activity is regulated as follows. Inhibited by zinc. Converts beta-D-mannuronic acid (M) to alpha-L-guluronic acid (G), producing a polymer with gel-forming capacity, required for the formation of the cyst coat. This is Mannuronan C5-epimerase AlgE5 from Azotobacter vinelandii.